The following is a 409-amino-acid chain: Multifunctional CCA protein (409 aa).

2 residues coordinate ATP: glycine 8 and arginine 11. Glycine 8 and arginine 11 together coordinate CTP. Aspartate 21 and aspartate 23 together coordinate Mg(2+). ATP contacts are provided by arginine 91, arginine 137, and arginine 140. Arginine 91, arginine 137, and arginine 140 together coordinate CTP. Positions threonine 228–tyrosine 329 constitute an HD domain.

The protein belongs to the tRNA nucleotidyltransferase/poly(A) polymerase family. Bacterial CCA-adding enzyme type 1 subfamily. In terms of assembly, monomer. Can also form homodimers and oligomers. The cofactor is Mg(2+). It depends on Ni(2+) as a cofactor.

The catalysed reaction is a tRNA precursor + 2 CTP + ATP = a tRNA with a 3' CCA end + 3 diphosphate. The enzyme catalyses a tRNA with a 3' CCA end + 2 CTP + ATP = a tRNA with a 3' CCACCA end + 3 diphosphate. Functionally, catalyzes the addition and repair of the essential 3'-terminal CCA sequence in tRNAs without using a nucleic acid template. Adds these three nucleotides in the order of C, C, and A to the tRNA nucleotide-73, using CTP and ATP as substrates and producing inorganic pyrophosphate. tRNA 3'-terminal CCA addition is required both for tRNA processing and repair. Also involved in tRNA surveillance by mediating tandem CCA addition to generate a CCACCA at the 3' terminus of unstable tRNAs. While stable tRNAs receive only 3'-terminal CCA, unstable tRNAs are marked with CCACCA and rapidly degraded. This Pseudomonas fluorescens (strain SBW25) protein is Multifunctional CCA protein.